A 340-amino-acid chain; its full sequence is GTP 3',8-cyclase (340 aa).

Residues 8–227 (KLGRPIRDLR…DMIESHFDIE (220 aa)) form the Radical SAM core domain. GTP is bound at residue Arg-17. Residues Cys-24 and Cys-28 each coordinate [4Fe-4S] cluster. Tyr-30 provides a ligand contact to S-adenosyl-L-methionine. Cys-31 is a [4Fe-4S] cluster binding site. Arg-71 provides a ligand contact to GTP. An S-adenosyl-L-methionine-binding site is contributed by Gly-75. Position 102 (Thr-102) interacts with GTP. Ser-126 serves as a coordination point for S-adenosyl-L-methionine. Residue Lys-163 coordinates GTP. Met-197 contacts S-adenosyl-L-methionine. Residues Cys-261 and Cys-264 each coordinate [4Fe-4S] cluster. 266 to 268 (RAR) provides a ligand contact to GTP. Cys-278 lines the [4Fe-4S] cluster pocket.

The protein belongs to the radical SAM superfamily. MoaA family. As to quaternary structure, monomer and homodimer. [4Fe-4S] cluster is required as a cofactor.

The catalysed reaction is GTP + AH2 + S-adenosyl-L-methionine = (8S)-3',8-cyclo-7,8-dihydroguanosine 5'-triphosphate + 5'-deoxyadenosine + L-methionine + A + H(+). The protein operates within cofactor biosynthesis; molybdopterin biosynthesis. Catalyzes the cyclization of GTP to (8S)-3',8-cyclo-7,8-dihydroguanosine 5'-triphosphate. The protein is GTP 3',8-cyclase of Staphylococcus haemolyticus (strain JCSC1435).